The primary structure comprises 118 residues: Small ribosomal subunit protein uS13 (118 aa).

The segment at 94 to 118 (SLPLRGQRTKTNARTRKGPRKPIKR) is disordered.

It belongs to the universal ribosomal protein uS13 family. In terms of assembly, part of the 30S ribosomal subunit. Forms a loose heterodimer with protein S19. Forms two bridges to the 50S subunit in the 70S ribosome.

Functionally, located at the top of the head of the 30S subunit, it contacts several helices of the 16S rRNA. In the 70S ribosome it contacts the 23S rRNA (bridge B1a) and protein L5 of the 50S subunit (bridge B1b), connecting the 2 subunits; these bridges are implicated in subunit movement. Contacts the tRNAs in the A and P-sites. The sequence is that of Small ribosomal subunit protein uS13 from Pseudoalteromonas translucida (strain TAC 125).